Here is a 366-residue protein sequence, read N- to C-terminus: Ribosomal RNA large subunit methyltransferase M (366 aa).

Residues Ser188, 221 to 224 (CPGG), Asp240, Asp260, and Asp277 each bind S-adenosyl-L-methionine. The active-site Proton acceptor is the Lys306.

Belongs to the class I-like SAM-binding methyltransferase superfamily. RNA methyltransferase RlmE family. RlmM subfamily. In terms of assembly, monomer.

The protein resides in the cytoplasm. The enzyme catalyses cytidine(2498) in 23S rRNA + S-adenosyl-L-methionine = 2'-O-methylcytidine(2498) in 23S rRNA + S-adenosyl-L-homocysteine + H(+). Catalyzes the 2'-O-methylation at nucleotide C2498 in 23S rRNA. This chain is Ribosomal RNA large subunit methyltransferase M, found in Pectobacterium atrosepticum (strain SCRI 1043 / ATCC BAA-672) (Erwinia carotovora subsp. atroseptica).